Reading from the N-terminus, the 207-residue chain is Thymidylate kinase (207 aa).

Residue 7 to 14 participates in ATP binding; the sequence is GCEGTGKT.

This sequence belongs to the thymidylate kinase family.

It carries out the reaction dTMP + ATP = dTDP + ADP. Functionally, phosphorylation of dTMP to form dTDP in both de novo and salvage pathways of dTTP synthesis. In Aster yellows witches'-broom phytoplasma (strain AYWB), this protein is Thymidylate kinase.